The sequence spans 394 residues: Phosphoglycerate kinase (394 aa).

Substrate-binding positions include 21–23 (DFN), arginine 36, 59–62 (HLGR), arginine 118, and arginine 151. Residues lysine 202, glycine 293, glutamate 324, and 350 to 353 (GGDS) contribute to the ATP site.

The protein belongs to the phosphoglycerate kinase family. As to quaternary structure, monomer.

Its subcellular location is the cytoplasm. The catalysed reaction is (2R)-3-phosphoglycerate + ATP = (2R)-3-phospho-glyceroyl phosphate + ADP. The protein operates within carbohydrate degradation; glycolysis; pyruvate from D-glyceraldehyde 3-phosphate: step 2/5. This Exiguobacterium sp. (strain ATCC BAA-1283 / AT1b) protein is Phosphoglycerate kinase.